Consider the following 387-residue polypeptide: Anhydro-N-acetylmuramic acid kinase (387 aa).

9–16 is an ATP binding site; that stretch reads GTSADGVD.

This sequence belongs to the anhydro-N-acetylmuramic acid kinase family.

It catalyses the reaction 1,6-anhydro-N-acetyl-beta-muramate + ATP + H2O = N-acetyl-D-muramate 6-phosphate + ADP + H(+). Its pathway is amino-sugar metabolism; 1,6-anhydro-N-acetylmuramate degradation. It participates in cell wall biogenesis; peptidoglycan recycling. In terms of biological role, catalyzes the specific phosphorylation of 1,6-anhydro-N-acetylmuramic acid (anhMurNAc) with the simultaneous cleavage of the 1,6-anhydro ring, generating MurNAc-6-P. Is required for the utilization of anhMurNAc either imported from the medium or derived from its own cell wall murein, and thus plays a role in cell wall recycling. The sequence is that of Anhydro-N-acetylmuramic acid kinase from Synechococcus sp. (strain WH7803).